The following is a 791-amino-acid chain: uncharacterized protein (791 aa).

4 consecutive transmembrane segments (helical) span residues 104–124 (MWILAFGLATVIAGVDAFFLM), 131–151 (IAAIVALLVAYPLGQLWYYII), 177–197 (ACLYIFVNICVSAKLVNTLII), and 226–246 (WSGLALPILVYPPTLIWPSVL). N-linked (GlcNAc...) asparagine glycosylation occurs at asparagine 265. Transmembrane regions (helical) follow at residues 274 to 294 (FFIVFVASFIWYWFPDLIFPA), 309 to 329 (SAVLSQIFGVKTGLGLFPLTL), 346 to 366 (WATCCIFTSFVFWIWIVLPGL), 421 to 441 (FIINIALSLGAFSSMMISFFL), 471 to 491 (VHWGFYLASIIVSLGLGFAFT), 501 to 521 (SYGFVVSMVIGAALYIPLSLI), 533 to 553 (AFFEIVAAFWFNGQPMALLYF), and 583 to 603 (LVAALLFTSGIWSSLVNSAVT). Residue asparagine 621 is glycosylated (N-linked (GlcNAc...) asparagine). The next 3 helical transmembrane spans lie at 653 to 673 (FVMWFFLVGAVVSVVVYLLQI), 697 to 717 (SVTGINYSTWAAVAFCFNYLI), and 733 to 753 (AAAMDCGVAIAGLFIYFCVVY). N-linked (GlcNAc...) asparagine glycosylation occurs at asparagine 759.

It belongs to the oligopeptide OPT transporter family.

It localises to the membrane. This is an uncharacterized protein from Schizosaccharomyces pombe (strain 972 / ATCC 24843) (Fission yeast).